The chain runs to 389 residues: Alcohol dehydrogenase-like 5 (389 aa).

Zn(2+) contacts are provided by C54, T56, H77, C107, C110, C113, C121, and C186. 2 residues coordinate an alcohol: T56 and H77. T56 is a binding site for NAD(+). Residues 211–216 (GLGAVG), D235, K240, 305–307 (LGI), F332, and R382 contribute to the NAD(+) site.

Belongs to the zinc-containing alcohol dehydrogenase family. Class-III subfamily. As to quaternary structure, homodimer. Zn(2+) serves as cofactor.

The protein localises to the cytoplasm. The catalysed reaction is a primary alcohol + NAD(+) = an aldehyde + NADH + H(+). It carries out the reaction a secondary alcohol + NAD(+) = a ketone + NADH + H(+). This chain is Alcohol dehydrogenase-like 5, found in Arabidopsis thaliana (Mouse-ear cress).